The chain runs to 192 residues: Actin, muscle (192 aa).

The protein belongs to the actin family.

It localises to the cytoplasm. The protein localises to the cytoskeleton. It catalyses the reaction ATP + H2O = ADP + phosphate + H(+). Functionally, actins are highly conserved proteins that are involved in various types of cell motility and are ubiquitously expressed in all eukaryotic cells. This chain is Actin, muscle, found in Chionoecetes opilio (Atlantic snow crab).